The sequence spans 302 residues: N-acetylmuramic acid 6-phosphate etherase (302 aa).

The SIS domain maps to 55–218 (AYPKFDQGGR…STGIMVKSGK (164 aa)). Glutamate 83 acts as the Proton donor in catalysis. The active site involves glutamate 114.

Belongs to the GCKR-like family. MurNAc-6-P etherase subfamily. In terms of assembly, homodimer.

It carries out the reaction N-acetyl-D-muramate 6-phosphate + H2O = N-acetyl-D-glucosamine 6-phosphate + (R)-lactate. It participates in amino-sugar metabolism; N-acetylmuramate degradation. In terms of biological role, specifically catalyzes the cleavage of the D-lactyl ether substituent of MurNAc 6-phosphate, producing GlcNAc 6-phosphate and D-lactate. The sequence is that of N-acetylmuramic acid 6-phosphate etherase from Levilactobacillus brevis (strain ATCC 367 / BCRC 12310 / CIP 105137 / JCM 1170 / LMG 11437 / NCIMB 947 / NCTC 947) (Lactobacillus brevis).